Reading from the N-terminus, the 245-residue chain is Geranylgeranylglyceryl phosphate synthase (245 aa).

Residues D24 and S54 each contribute to the Mg(2+) site. Residues 172–178 (YLEAGSG), 203–204 (GG), and 225–226 (GT) contribute to the sn-glycerol 1-phosphate site.

This sequence belongs to the GGGP/HepGP synthase family. Group II subfamily. It depends on Mg(2+) as a cofactor.

It is found in the cytoplasm. It carries out the reaction sn-glycerol 1-phosphate + (2E,6E,10E)-geranylgeranyl diphosphate = sn-3-O-(geranylgeranyl)glycerol 1-phosphate + diphosphate. It functions in the pathway membrane lipid metabolism; glycerophospholipid metabolism. Its function is as follows. Prenyltransferase that catalyzes the transfer of the geranylgeranyl moiety of geranylgeranyl diphosphate (GGPP) to the C3 hydroxyl of sn-glycerol-1-phosphate (G1P). This reaction is the first ether-bond-formation step in the biosynthesis of archaeal membrane lipids. The polypeptide is Geranylgeranylglyceryl phosphate synthase (Staphylothermus marinus (strain ATCC 43588 / DSM 3639 / JCM 9404 / F1)).